The chain runs to 108 residues: Anti-sigma-B factor antagonist (108 aa).

The STAS domain maps to 3-108 (LNIETITHDD…MHVNEGTEVE (106 aa)). A Phosphoserine modification is found at Ser-57.

Belongs to the anti-sigma-factor antagonist family. Post-translationally, phosphorylated by RsbW on a serine residue.

Functionally, positive regulator of sigma-B activity. Non-phosphorylated RsbV binds to RsbW, preventing its association with sigma-B. When phosphorylated, releases RsbW, which is then free to complex with and inactivate sigma-B. The sequence is that of Anti-sigma-B factor antagonist (rsbV) from Staphylococcus epidermidis.